The primary structure comprises 134 residues: Cytochrome b (134 aa).

The next 3 helical transmembrane spans lie at 33–53, 77–98, and 113–133; these read FGSL…FLAM, WLLR…YLHV, and WNIG…GYVL. Heme b is bound by residues His83 and His97.

Belongs to the cytochrome b family. As to quaternary structure, the cytochrome bc1 complex contains 11 subunits: 3 respiratory subunits (MT-CYB, CYC1 and UQCRFS1), 2 core proteins (UQCRC1 and UQCRC2) and 6 low-molecular weight proteins (UQCRH/QCR6, UQCRB/QCR7, UQCRQ/QCR8, UQCR10/QCR9, UQCR11/QCR10 and a cleavage product of UQCRFS1). This cytochrome bc1 complex then forms a dimer. Requires heme b as cofactor.

The protein resides in the mitochondrion inner membrane. In terms of biological role, component of the ubiquinol-cytochrome c reductase complex (complex III or cytochrome b-c1 complex) that is part of the mitochondrial respiratory chain. The b-c1 complex mediates electron transfer from ubiquinol to cytochrome c. Contributes to the generation of a proton gradient across the mitochondrial membrane that is then used for ATP synthesis. The protein is Cytochrome b (MT-CYB) of Sturnira tildae (Tilda's yellow-shouldered bat).